The sequence spans 383 residues: Cathepsin D (383 aa).

A signal peptide spans 1-18 (MKLLILTLFLATIVLAQA). Positions 19-48 (LTVPLNFHQASRESRRRVPQKWSNRLSALN) are excised as a propeptide. The Peptidase A1 domain occupies 63 to 378 (YYGAITIGTP…DFGNKQVGFA (316 aa)). The active site involves aspartate 81. An intrachain disulfide couples cysteine 94 to cysteine 101. N-linked (GlcNAc...) asparagine glycosylation is found at asparagine 118 and asparagine 238. Cysteine 259 and cysteine 263 form a disulfide bridge. Aspartate 268 is a catalytic residue. Cysteine 302 and cysteine 339 are oxidised to a cystine. N-linked (GlcNAc...) asparagine glycosylation occurs at asparagine 310.

This sequence belongs to the peptidase A1 family. As to quaternary structure, monomer. In terms of processing, N-glycosylated on 2 out of the 3 potential sites. Glycans contain sulfated Mannose.

The protein resides in the lysosome. Its subcellular location is the secreted. The enzyme catalyses Specificity similar to, but narrower than, that of pepsin A. Does not cleave the 4-Gln-|-His-5 bond in B chain of insulin.. Functionally, protease that may act during cell growth and/or development. The chain is Cathepsin D (ctsD) from Dictyostelium discoideum (Social amoeba).